The chain runs to 570 residues: Nucleoprotein (570 aa).

The segment at 54–241 is binding site for the cap structure m7GTP; the sequence is MRKDKRNDSD…IDVSKSSINV (188 aa). The interval 342–361 is disordered; sequence IDLSQNKQMSPAKPKGAGHG. 2 residues coordinate Mn(2+): Asp-390 and Glu-392. Positions 400, 507, 510, and 530 each coordinate Zn(2+). Position 534 (Asp-534) interacts with Mn(2+).

The protein belongs to the arenaviridae nucleocapsid protein family. Homomultimerizes to form the nucleocapsid. Binds to viral genomic RNA. Interacts with glycoprotein G2. Interacts with protein Z; this interaction probably directs the encapsidated genome to budding sites. Interacts with protein L; this interaction does not interfere with Z-L interaction. Interacts with host IKBKE (via Protein kinase domain); the interaction inhibits IKBKE kinase activity.

Its subcellular location is the virion. The protein resides in the host cytoplasm. Functionally, encapsidates the genome, protecting it from nucleases. The encapsidated genomic RNA is termed the nucleocapsid (NC). Serves as template for viral transcription and replication. The increased presence of protein N in host cell does not seem to trigger the switch from transcription to replication as observed in other negative strain RNA viruses. Through the interaction with host IKBKE, strongly inhibits the phosphorylation and nuclear translocation of host IRF3, a protein involved in interferon activation pathway, leading to the inhibition of interferon-beta and IRF3-dependent promoters activation. Also encodes a functional 3'-5' exoribonuclease that degrades preferentially dsRNA substrates and thereby participates in the suppression of interferon induction. This chain is Nucleoprotein, found in Praomys (African soft-furred rats).